The chain runs to 456 residues: Bifunctional protein GlmU (456 aa).

Positions 1-229 are pyrophosphorylase; sequence MLNNAMSVVI…LSEVEGVNNR (229 aa). Residues 11 to 14, Lys-25, Gln-76, 81 to 82, 103 to 105, Gly-140, Glu-154, Asn-169, and Asn-227 contribute to the UDP-N-acetyl-alpha-D-glucosamine site; these read LAAG, GT, and YGD. Asp-105 contributes to the Mg(2+) binding site. A Mg(2+)-binding site is contributed by Asn-227. The tract at residues 230–250 is linker; that stretch reads LQLSRLERVYQSEQAEKLLLA. The tract at residues 251–456 is N-acetyltransferase; it reads GVMLRDPARF…EGWRRPVKKK (206 aa). UDP-N-acetyl-alpha-D-glucosamine contacts are provided by Arg-333 and Lys-351. The active-site Proton acceptor is His-363. The UDP-N-acetyl-alpha-D-glucosamine site is built by Tyr-366 and Asn-377. Residues Ala-380, 386–387, Ser-405, Ala-423, and Arg-440 each bind acetyl-CoA; that span reads NY.

The protein in the N-terminal section; belongs to the N-acetylglucosamine-1-phosphate uridyltransferase family. This sequence in the C-terminal section; belongs to the transferase hexapeptide repeat family. As to quaternary structure, homotrimer. Mg(2+) serves as cofactor.

The protein localises to the cytoplasm. It carries out the reaction alpha-D-glucosamine 1-phosphate + acetyl-CoA = N-acetyl-alpha-D-glucosamine 1-phosphate + CoA + H(+). The catalysed reaction is N-acetyl-alpha-D-glucosamine 1-phosphate + UTP + H(+) = UDP-N-acetyl-alpha-D-glucosamine + diphosphate. The protein operates within nucleotide-sugar biosynthesis; UDP-N-acetyl-alpha-D-glucosamine biosynthesis; N-acetyl-alpha-D-glucosamine 1-phosphate from alpha-D-glucosamine 6-phosphate (route II): step 2/2. Its pathway is nucleotide-sugar biosynthesis; UDP-N-acetyl-alpha-D-glucosamine biosynthesis; UDP-N-acetyl-alpha-D-glucosamine from N-acetyl-alpha-D-glucosamine 1-phosphate: step 1/1. It functions in the pathway bacterial outer membrane biogenesis; LPS lipid A biosynthesis. Its function is as follows. Catalyzes the last two sequential reactions in the de novo biosynthetic pathway for UDP-N-acetylglucosamine (UDP-GlcNAc). The C-terminal domain catalyzes the transfer of acetyl group from acetyl coenzyme A to glucosamine-1-phosphate (GlcN-1-P) to produce N-acetylglucosamine-1-phosphate (GlcNAc-1-P), which is converted into UDP-GlcNAc by the transfer of uridine 5-monophosphate (from uridine 5-triphosphate), a reaction catalyzed by the N-terminal domain. The sequence is that of Bifunctional protein GlmU from Shigella boydii serotype 18 (strain CDC 3083-94 / BS512).